The primary structure comprises 313 residues: Porphobilinogen deaminase (313 aa).

Cys240 carries the post-translational modification S-(dipyrrolylmethanemethyl)cysteine.

This sequence belongs to the HMBS family. In terms of assembly, monomer. Dipyrromethane is required as a cofactor.

It carries out the reaction 4 porphobilinogen + H2O = hydroxymethylbilane + 4 NH4(+). The protein operates within porphyrin-containing compound metabolism; protoporphyrin-IX biosynthesis; coproporphyrinogen-III from 5-aminolevulinate: step 2/4. Tetrapolymerization of the monopyrrole PBG into the hydroxymethylbilane pre-uroporphyrinogen in several discrete steps. The sequence is that of Porphobilinogen deaminase from Moorella thermoacetica (strain ATCC 39073 / JCM 9320).